A 116-amino-acid chain; its full sequence is Large ribosomal subunit protein bL19 (116 aa).

The protein belongs to the bacterial ribosomal protein bL19 family.

This protein is located at the 30S-50S ribosomal subunit interface and may play a role in the structure and function of the aminoacyl-tRNA binding site. This is Large ribosomal subunit protein bL19 from Solidesulfovibrio magneticus (strain ATCC 700980 / DSM 13731 / RS-1) (Desulfovibrio magneticus).